Consider the following 543-residue polypeptide: Transmembrane protease serine 13 (543 aa).

2 disordered regions span residues 1–96 and 109–129; these read MDRG…TRVY and RASP…PGLS. Topologically, residues 1–143 are cytoplasmic; it reads MDRGSHRNSS…SWQETQRQLP (143 aa). A run of 2 repeats spans residues 14–17 and 18–22. A 4 X 4 AA repeats of T-P-P-Q region spans residues 14–49; that stretch reads TPPQASPARTSPARAPPQASPARTPPQASPARTPPQ. The 8 X 5 AA repeats of A-S-P-A-R stretch occupies residues 18–69; it reads ASPARTSPARAPPQASPARTPPQASPARTPPQASPARAPPPQASPARASPAR. A 2-2; approximate repeat occupies 23–27; it reads TSPAR. Positions 27–60 are enriched in pro residues; sequence RAPPQASPARTPPQASPARTPPQASPARAPPPQA. One copy of the 1-2; approximate repeat lies at 28–31; that stretch reads APPQ. A run of 5 repeats spans residues 32–36, 37–40, 41–45, 46–49, and 50–54. A 2-6; approximate repeat occupies 55–59; sequence APPPQ. A run of 2 repeats spans residues 60 to 64 and 65 to 69. 2 stretches are compositionally biased toward low complexity: residues 61-94 and 109-120; these read SPAR…SPTR and RASPARSAPATR. A helical; Signal-anchor for type II membrane protein transmembrane segment spans residues 144 to 164; it reads LIGCVILLISLVISLILLFYF. At 165 to 543 the chain is on the extracellular side; it reads WRGHTGIKYK…MESEVRFRKS (379 aa). Residues 180–202 form the LDL-receptor class A domain; the sequence is CPIHAVRCDGVVDCKMKSDELGC. Residues 199-301 form the SRCR domain; it reads ELGCVRFDWD…HCGLRAMTGR (103 aa). 3 disulfide bridges follow: C226-C290, C239-C293, and C327-C343. 2 N-linked (GlcNAc...) asparagine glycosylation sites follow: N231 and N268. The Peptidase S1 domain maps to 302–535; the sequence is IVGGALTSES…VLPWIYRKME (234 aa). The Charge relay system role is filled by H342. N-linked (GlcNAc...) asparagine glycosylation occurs at N381. Catalysis depends on D390, which acts as the Charge relay system. A glycan (N-linked (GlcNAc...) asparagine) is linked at N421. 3 disulfide bridges follow: C424–C493, C456–C472, and C483–C511. S487 (charge relay system) is an active-site residue.

Belongs to the peptidase S1 family. Interacts with SPINT1/HAI-1; the interaction promotes the phosphorylation and cell membrane localization of TMPRSS13. Interacts with SPINT2/HAI-2; the interaction promotes the phosphorylation and cell membrane localization of TMPRSS13. In terms of processing, the inactive zymogen is post-translationally modified and then trafficked to the cell surface, whereby it undergoes autocatalytic cleavage resulting in an activated form that is released extracellularly. Post-translationally, phosphorylation is required for localization at the cell surface. Phosphorylation increases following inhibition of protease activity by SPINT2/HAI-2. In terms of tissue distribution, expressed in the suprabasal squamous epithelium of the epidermis, hair follicles, oral epithelium, cornea, upper digestive tract, transitional epithelium of the bladder, prostate, heart, intestine, kidney and thymus.

Its subcellular location is the cell membrane. The protein resides in the secreted. It localises to the cytoplasm. Its activity is regulated as follows. Cleavage of HGF is inhibited by SPINT1/HAI-1 via the BPTI/Kunitz inhibitor 1 domain. Functionally, serine protease. Cleaves the proform of PRSS8/prostasin to form the active protein. Cleaves the proform of HGF to form the active protein which promotes MAPK signaling. Promotes the formation of the stratum corneum and subsequently the epidermal barrier in embryos. The protein is Transmembrane protease serine 13 (Tmprss13) of Mus musculus (Mouse).